Consider the following 109-residue polypeptide: Staphostatin B (109 aa).

Positions 97–101 are binds to staphopain B; the sequence is IGTSR.

It belongs to the protease inhibitor I57 (SspC) family. As to quaternary structure, forms a stable non-covalent complex with prematurely activated/folded SspB.

It localises to the cytoplasm. In terms of biological role, specifically inhibits the cysteine protease staphopain B (SspB) by blocking the active site of the enzyme. Probably required to protect cytoplasmic proteins from being degraded by prematurely activated/folded prostaphopain B. Also involved in growth capacity, viability and bacterial morphology. This Staphylococcus aureus (strain Mu50 / ATCC 700699) protein is Staphostatin B (sspC).